We begin with the raw amino-acid sequence, 313 residues long: ADP,ATP carrier protein (313 aa).

Solcar repeat units lie at residues 11 to 104, 116 to 208, and 216 to 302; these read PPFV…FKKM, KWMA…IKPV, and NNFL…LQVL. 5 consecutive transmembrane segments (helical) span residues 13–40, 81–105, 114–134, 184–205, and 219–239; these read FVADFLMGGVSAAVSKTAAAPIERIKLL, TANVIRYFPTQALNFAFRDKFKKMF, YWKWMAGNLASGGAAGATSLL, FGPSVAGIVVYRGLYFGLYDSI, and LASFALGWCVTTAAGIASYPL. Residues R86 and R98 each coordinate ADP. Residue R243 coordinates ADP. The tract at residues 243–248 is important for transport activity; it reads RRRMMM. The short motif at 243-248 is the Nucleotide carrier signature motif element; sequence RRRMMM. The helical transmembrane segment at 279-299 threads the bilayer; sequence AGANILRGVAGAGVLSIYDQL.

It belongs to the mitochondrial carrier (TC 2.A.29) family. As to quaternary structure, monomer.

Its subcellular location is the mitochondrion inner membrane. The catalysed reaction is ADP(in) + ATP(out) = ADP(out) + ATP(in). Its activity is regulated as follows. The matrix-open state (m-state) is inhibited by the membrane-permeable bongkrekic acid (BKA). The cytoplasmic-open state (c-state) is inhibited by the membrane-impermeable toxic inhibitor carboxyatractyloside (CATR). Its function is as follows. ADP:ATP antiporter that mediates import of ADP into the mitochondrial matrix for ATP synthesis, and export of ATP out to fuel the cell. Cycles between the cytoplasmic-open state (c-state) and the matrix-open state (m-state): operates by the alternating access mechanism with a single substrate-binding site intermittently exposed to either the cytosolic (c-state) or matrix (m-state) side of the inner mitochondrial membrane. In Neurospora crassa (strain ATCC 24698 / 74-OR23-1A / CBS 708.71 / DSM 1257 / FGSC 987), this protein is ADP,ATP carrier protein (aac).